The primary structure comprises 76 residues: Esculentin-2MT3 (76 aa).

A signal peptide spans 1-22 (MFTLKKSMLLLFFLGTISLSLC). The propeptide at 23 to 37 (EEERNADEDDGEKEV) is removed in mature form. A disulfide bridge links Cys70 with Cys76.

The protein belongs to the frog skin active peptide (FSAP) family. Esculentin subfamily. As to expression, expressed by the skin glands.

Its subcellular location is the secreted. Antimicrobial peptide. This Amolops mantzorum (Sichuan torrent frog) protein is Esculentin-2MT3.